The primary structure comprises 414 residues: Serine/arginine-rich splicing factor SR45 (414 aa).

Disordered stretches follow at residues 1–95 and 175–414; these read MAKP…KAVQ and LPPR…PRKT. Composition is skewed to low complexity over residues 10–34 and 42–60; these read SPSV…SRSI and RSLS…GSRS. Residues 62 to 69 carry the Nuclear localization signal 1 motif; sequence PRRGKSPA. Phosphoserine is present on S77. In terms of domain architecture, RRM spans 98-176; sequence LVLHVDSLSR…KVVKATFTLP (79 aa). The segment covering 176 to 191 has biased composition (low complexity); sequence PPRQKVSSPPKPVSAA. Residues 205 to 220 are compositionally biased toward basic and acidic residues; sequence DAEKDGGPRRPRETSP. Residues 218–219 are required for isoform 1 function in petal development; it reads TS. Positions 228 to 243 are enriched in basic residues; the sequence is PRRRSPLPRRGLSPRR. Positions 229-236 match the Nuclear localization signal 2 motif; sequence RRRSPLPR. Position 256 is a phosphoserine (S256). 3 consecutive short sequence motifs (nuclear localization signal) follow at residues 284 to 291, 318 to 325, and 338 to 345; these read PRRYRSPP, PRRLRSPP, and IRRPGRSR. Basic residues-rich tracts occupy residues 285-343 and 352-363; these read RRYR…RPGR and RKGRGPAGRRGR. Over residues 364-373 the composition is skewed to low complexity; the sequence is SSSYSSSPSP. The Nuclear localization signal 6 signature appears at 373–380; sequence PRRIPRKI. The segment covering 375–394 has biased composition (basic residues); that stretch reads RIPRKISRSRSPKRPLRGKR. Residues 404-414 show a composition bias toward pro residues; that stretch reads SPPPPPPPRKT.

This sequence belongs to the splicing factor SR family. SR45 subfamily. As to quaternary structure, component of the spliceosome. Interacts with AFC2, U2AF35A, U2AF35B, RNU1, SCL33 and SKIP. The interaction with AFC2 depends on phosphorylation status. Interaction with RNU1 defines initial 5' splice sites and interaction with U2AF35B 3' splice sites in the early stage of spliceosome assembly. Post-translationally, phosphorylated by AFC2. The phosphorylation status regulates intranuclear distribution. In terms of tissue distribution, especially present in actively growing regions and dividing cells. Mostly expressed in roots (primary and secondary root meristem), shoot apical meristem (SAM), leaf primordia, pollen and inflorescence, and, to a lower extent, in leaves, vascular tissue, hydathode and fruits.

It is found in the nucleus speckle. The protein localises to the nucleus. It localises to the nucleoplasm. In terms of biological role, involved in 5' and 3' splicing site selection of introns, and may bridge the 5' and 3' components of the spliceosome. Isoform 1 is required during flower petal development and isoform 2 is involved in root growth. Negatively regulates glucose and abscisic acid (ABA) signaling during early seedling development. Involved in the RNA-directed DNA methylation pathway. Modulates KIN10 stability in response to sugars, probably through the splicing regulation of 5PTASE13, a protein implicated in the proteasomal degradation of KIN10. This is Serine/arginine-rich splicing factor SR45 from Arabidopsis thaliana (Mouse-ear cress).